The sequence spans 401 residues: GRIP domain-containing protein C119.12 (401 aa).

A coiled-coil region spans residues 7–296 (NETKLVENEN…TLLIGKLQHE (290 aa)). The GRIP domain maps to 315-366 (NNAEKIDKQLISNLFVSFLTLPRADTKRFEILQLISSVLDWNDTQREQTGLQ).

Its subcellular location is the golgi apparatus lumen. This Schizosaccharomyces pombe (strain 972 / ATCC 24843) (Fission yeast) protein is GRIP domain-containing protein C119.12.